The following is a 333-amino-acid chain: Adenosine deaminase (333 aa).

Histidine 12 and histidine 14 together coordinate Zn(2+). Substrate contacts are provided by histidine 14, aspartate 16, and glycine 170. Histidine 197 is a binding site for Zn(2+). The active-site Proton donor is glutamate 200. Residue aspartate 278 coordinates Zn(2+). A substrate-binding site is contributed by aspartate 279.

This sequence belongs to the metallo-dependent hydrolases superfamily. Adenosine and AMP deaminases family. Adenosine deaminase subfamily. The cofactor is Zn(2+).

It catalyses the reaction adenosine + H2O + H(+) = inosine + NH4(+). It carries out the reaction 2'-deoxyadenosine + H2O + H(+) = 2'-deoxyinosine + NH4(+). Functionally, catalyzes the hydrolytic deamination of adenosine and 2-deoxyadenosine. The sequence is that of Adenosine deaminase from Proteus mirabilis (strain HI4320).